Here is a 541-residue protein sequence, read N- to C-terminus: Chaperonin GroEL 2 (541 aa).

ATP contacts are provided by residues 29-32 (TLGP), 86-90 (DGTTT), Gly413, 476-478 (NAA), and Asp492.

This sequence belongs to the chaperonin (HSP60) family. In terms of assembly, forms a cylinder of 14 subunits composed of two heptameric rings stacked back-to-back. Interacts with the co-chaperonin GroES.

Its subcellular location is the secreted. It is found in the capsule. The protein localises to the cell surface. The protein resides in the cell wall. It carries out the reaction ATP + H2O + a folded polypeptide = ADP + phosphate + an unfolded polypeptide.. Together with its co-chaperonin GroES, plays an essential role in assisting protein folding. The GroEL-GroES system forms a nano-cage that allows encapsulation of the non-native substrate proteins and provides a physical environment optimized to promote and accelerate protein folding. This Mycobacterium avium (strain 104) protein is Chaperonin GroEL 2.